The sequence spans 474 residues: Tryptophan biosynthesis protein TrpCF (474 aa).

Positions M1–P262 are indole-3-glycerol phosphate synthase. Positions N263–Y474 are N-(5'-phosphoribosyl)anthranilate isomerase.

The protein in the N-terminal section; belongs to the TrpC family. It in the C-terminal section; belongs to the TrpF family. As to quaternary structure, monomer.

The enzyme catalyses N-(5-phospho-beta-D-ribosyl)anthranilate = 1-(2-carboxyphenylamino)-1-deoxy-D-ribulose 5-phosphate. The catalysed reaction is 1-(2-carboxyphenylamino)-1-deoxy-D-ribulose 5-phosphate + H(+) = (1S,2R)-1-C-(indol-3-yl)glycerol 3-phosphate + CO2 + H2O. It participates in amino-acid biosynthesis; L-tryptophan biosynthesis; L-tryptophan from chorismate: step 3/5. The protein operates within amino-acid biosynthesis; L-tryptophan biosynthesis; L-tryptophan from chorismate: step 4/5. Functionally, bifunctional enzyme that catalyzes two sequential steps of tryptophan biosynthetic pathway. The first reaction is catalyzed by the isomerase, coded by the TrpF domain; the second reaction is catalyzed by the synthase, coded by the TrpC domain. In Corynebacterium glutamicum (strain ATCC 13032 / DSM 20300 / JCM 1318 / BCRC 11384 / CCUG 27702 / LMG 3730 / NBRC 12168 / NCIMB 10025 / NRRL B-2784 / 534), this protein is Tryptophan biosynthesis protein TrpCF (trpC).